A 530-amino-acid polypeptide reads, in one-letter code: Plexin domain-containing protein 2 (530 aa).

Residues 1 to 30 (MARFRRADLAAAGVMLLCHFLTDRFQFAHG) form the signal peptide. Topologically, residues 31 to 455 (EPGHHTNDWI…AEKKGGTLHA (425 aa)) are extracellular. N103 and N160 each carry an N-linked (GlcNAc...) asparagine glycan. The region spanning 327 to 372 (TCLQFNGCGPCVSSQIGFNCSWCSKLQRCSSGFDRHRQDWVDSGCP) is the PSI domain. Over residues 378 to 387 (KEKMCEKTEP) the composition is skewed to basic and acidic residues. The disordered stretch occupies residues 378–399 (KEKMCEKTEPGETSQTTTTSHT). Residues 390–399 (TSQTTTTSHT) show a composition bias toward low complexity. The helical transmembrane segment at 456–476 (GLIVGILILVLIIAAAILVTV) threads the bilayer. Residues 477-530 (YMYHHPTSAASIFFIERRPSRWPAMKFRRGSGHPAYAEVEPVGEKEGFIVSEQC) lie on the Cytoplasmic side of the membrane. A Phosphoserine modification is found at S507.

It belongs to the plexin family. In terms of assembly, interacts with CTTN. Expressed in tumor endothelium and in vessels of some normal tissues, such as the muscle and lung.

The protein resides in the membrane. May play a role in tumor angiogenesis. In Mus musculus (Mouse), this protein is Plexin domain-containing protein 2 (Plxdc2).